We begin with the raw amino-acid sequence, 391 residues long: Acetyl-CoA acetyltransferase (391 aa).

Catalysis depends on cysteine 88, which acts as the Acyl-thioester intermediate. Active-site proton acceptor residues include histidine 347 and cysteine 377.

It belongs to the thiolase-like superfamily. Thiolase family. As to quaternary structure, homotetramer.

The protein localises to the cytoplasm. It carries out the reaction 2 acetyl-CoA = acetoacetyl-CoA + CoA. The protein operates within metabolic intermediate biosynthesis; (R)-mevalonate biosynthesis; (R)-mevalonate from acetyl-CoA: step 1/3. The chain is Acetyl-CoA acetyltransferase (phaA) from Paracoccus denitrificans.